Consider the following 162-residue polypeptide: 2-C-methyl-D-erythritol 2,4-cyclodiphosphate synthase (162 aa).

2 residues coordinate a divalent metal cation: Asp-10 and His-12. 4-CDP-2-C-methyl-D-erythritol 2-phosphate is bound by residues 10–12 and 36–37; these read DVH and HS. Position 44 (His-44) interacts with a divalent metal cation. Residues 58-60, 63-67, and Arg-144 contribute to the 4-CDP-2-C-methyl-D-erythritol 2-phosphate site; these read DIG and FPDTD.

The protein belongs to the IspF family. In terms of assembly, homotrimer. A divalent metal cation is required as a cofactor.

It carries out the reaction 4-CDP-2-C-methyl-D-erythritol 2-phosphate = 2-C-methyl-D-erythritol 2,4-cyclic diphosphate + CMP. It participates in isoprenoid biosynthesis; isopentenyl diphosphate biosynthesis via DXP pathway; isopentenyl diphosphate from 1-deoxy-D-xylulose 5-phosphate: step 4/6. Its function is as follows. Involved in the biosynthesis of isopentenyl diphosphate (IPP) and dimethylallyl diphosphate (DMAPP), two major building blocks of isoprenoid compounds. Catalyzes the conversion of 4-diphosphocytidyl-2-C-methyl-D-erythritol 2-phosphate (CDP-ME2P) to 2-C-methyl-D-erythritol 2,4-cyclodiphosphate (ME-CPP) with a corresponding release of cytidine 5-monophosphate (CMP). The chain is 2-C-methyl-D-erythritol 2,4-cyclodiphosphate synthase from Laribacter hongkongensis (strain HLHK9).